Here is a 516-residue protein sequence, read N- to C-terminus: Probable serine/threonine-protein kinase WNK3 (516 aa).

The Protein kinase domain occupies 22–280; sequence GRYKEVLGKG…AKELLDDPFL (259 aa). ATP contacts are provided by residues 102-105 and Lys152; that span reads TEVF. The Proton acceptor role is filled by Asp169. Residues 426–451 are disordered; that stretch reads SSPKAGAGDSRSPFAPRSNSKLSSAQ. Positions 442 to 451 are enriched in polar residues; it reads RSNSKLSSAQ. The stretch at 457-490 forms a coiled coil; it reads EVGVIVEKLESLLRKQREEIEEMQRDQERIVTEF.

The protein belongs to the protein kinase superfamily. Ser/Thr protein kinase family. WNK subfamily.

It carries out the reaction L-seryl-[protein] + ATP = O-phospho-L-seryl-[protein] + ADP + H(+). It catalyses the reaction L-threonyl-[protein] + ATP = O-phospho-L-threonyl-[protein] + ADP + H(+). Its function is as follows. May regulate flowering time by modulating the photoperiod pathway. This Arabidopsis thaliana (Mouse-ear cress) protein is Probable serine/threonine-protein kinase WNK3 (WNK3).